Reading from the N-terminus, the 462-residue chain is Solute carrier family 41 member 3 (462 aa).

Transmembrane regions (helical) follow at residues 41–61, 121–141, 163–183, 194–214, 225–245, 258–278, 351–371, 380–400, and 424–444; these read CQVA…GLVM, LAVV…ASLM, VITA…IVIG, IATP…LALM, WYLT…WIFI, YGWF…LILS, VLLF…CLVE, IFVL…LYLA, and GLGD…DWLL.

This sequence belongs to the SLC41A transporter family.

The protein localises to the mitochondrion inner membrane. It catalyses the reaction Mg(2+)(in) + 2 Na(+)(out) = Mg(2+)(out) + 2 Na(+)(in). Its function is as follows. Na(+)/Mg(2+) ion exchanger that acts as a predominant Mg(2+) efflux system at the mitochondrial inner membrane. This chain is Solute carrier family 41 member 3 (Slc41a3), found in Rattus norvegicus (Rat).